Here is a 300-residue protein sequence, read N- to C-terminus: MVSALSCTHERRCYAIRTHLLQNYAGMGLSHYSGSSFVAAQHTGWYLRQAARIARAAEVFELQEDGTVLAEHILQPDSGVWTLYPQAQHKVEPLDDDFAVQLEFHCEKADYFHKKHGMTTTHSAIREAVQTVAPCKTLDLGCGQGHNALFLSLAGYDVRAVDHSPAAVASVLDMAAREQLPLRADAYDINAAALNEDYDFIFATVVFIFLQAGRVPEIIADMQAHTRPGGYNLIVSAMDTADYPCHMPFSFTFKEDELRQYYADWELLKYEEAVGLMHATDAQGRPIQLKFVTMLAKKPG.

The helical transmembrane segment at 200 to 221 (FIFATVVFIFLQAGRVPEIIAD) threads the bilayer.

Its subcellular location is the cell membrane. Functionally, induces agglutination of neuraminidase-treated erythrocytes. The chain is Hemagglutinin 1 (hag1) from Eikenella corrodens.